The following is a 408-amino-acid chain: Transmembrane protein 237 (408 aa).

Over residues 1 to 14 the composition is skewed to basic and acidic residues; it reads MRTDSGARLEEGHL. Residues 1-137 form a disordered region; that stretch reads MRTDSGARLE…RRKTKKTQPA (137 aa). Residues S25 and S49 each carry the phosphoserine modification. Residues 60 to 77 are compositionally biased toward basic and acidic residues; the sequence is RPSEGNEPSTKELKEHPE. Low complexity predominate over residues 95 to 106; it reads TSSTQKKSSSSS. Helical transmembrane passes span 227-247, 268-288, 303-323, and 358-378; these read MIGL…IVVI, LAYP…ISAF, FLAL…LILS, and WIVV…FLSY.

This sequence belongs to the TMEM237 family. Part of the tectonic-like complex (also named B9 complex). Interacts with TMEM107.

Its subcellular location is the membrane. It is found in the cell projection. It localises to the cilium. Component of the transition zone in primary cilia. Required for ciliogenesis. The polypeptide is Transmembrane protein 237 (TMEM237) (Homo sapiens (Human)).